We begin with the raw amino-acid sequence, 351 residues long: Protein arginine N-methyltransferase 1 (351 aa).

Residues 30 to 331 (KDYYFDSYAH…KNNRDLDFTV (302 aa)) form the SAM-dependent MTase PRMT-type domain. Residues H43, R52, G76, E98, and E127 each contribute to the S-adenosyl-L-methionine site. Active-site residues include E142 and E151.

Belongs to the class I-like SAM-binding methyltransferase superfamily. Protein arginine N-methyltransferase family. As to quaternary structure, homodimer. Homooctamer; individual homodimers associates to form a homooctamer and homooligomerization is required for proper localization to the cell membrane. Individual homodimers can associate to form a homohexamer. Component of a complex with lsm14a/rap55a. Interacts with cirbp.

Its subcellular location is the nucleus. It is found in the nucleoplasm. It localises to the cytoplasm. The protein resides in the cytosol. The catalysed reaction is L-arginyl-[protein] + 2 S-adenosyl-L-methionine = N(omega),N(omega)-dimethyl-L-arginyl-[protein] + 2 S-adenosyl-L-homocysteine + 2 H(+). It carries out the reaction L-arginyl-[protein] + S-adenosyl-L-methionine = N(omega)-methyl-L-arginyl-[protein] + S-adenosyl-L-homocysteine + H(+). It catalyses the reaction N(omega)-methyl-L-arginyl-[protein] + S-adenosyl-L-methionine = N(omega),N(omega)-dimethyl-L-arginyl-[protein] + S-adenosyl-L-homocysteine + H(+). In terms of biological role, arginine methyltransferase that methylates (mono and asymmetric dimethylation) the guanidino nitrogens of arginyl residues present in target proteins. Constitutes the main enzyme that mediates monomethylation and asymmetric dimethylation of histone H4 'Arg-3' (H4R3me1 and H4R3me2a, respectively), a specific tag for epigenetic transcriptional activation. Methylates ilf3 to regulate its DNA-binding activity. Required for neural induction, playing a key role in the control of epidermal versus neural cell fate choice. Methylates cirbp to regulate its subcellular location. Acts transiently during metamorphosis as a transcription coactivator, enhancing thyroid hormone (T3) receptor (TR)-mediated transcription by enhancing TR binding to the T3 response element (TRE), and histone modification through recruitment of other coactivators. The chain is Protein arginine N-methyltransferase 1 from Xenopus tropicalis (Western clawed frog).